The following is a 446-amino-acid chain: uncharacterized protein (446 aa).

A run of 12 helical transmembrane segments spans residues 20-40, 42-62, 95-115, 127-147, 160-180, 205-225, 237-257, 284-304, 331-351, 355-375, 388-408, and 414-434; these read LIGVGCTIGTGFFLGSSIAIV, SGFSVLLSFLIAGIGTYFVFE, WVYWTSEMLITGSQLTAISLF, VFASIYAVLGLLIIFTGLSVF, AAIFMFIVIAILALCGILSGG, LIYAFYAFGGIEVMGLMAVHL, LMLATLAIIYIISIGLALLLV, IFNGIFIIAGFSTLVASLFAV, WPALGLTFAGLVLSIILSLVL, IYEHMTTAAGLMLLYTWLFIL, GKTQIYLAMVLIAAAVSGTLF, and PGFFVSIGFLVIIAIVTMIYQ.

The protein belongs to the amino acid-polyamine-organocation (APC) superfamily.

The protein localises to the cell membrane. This is an uncharacterized protein from Bacillus subtilis (strain 168).